Here is a 220-residue protein sequence, read N- to C-terminus: Large ribosomal subunit protein bL9 (220 aa).

Residues 167-184 (AAAEVEQAEDVAAAEQQD) are compositionally biased toward low complexity. The disordered stretch occupies residues 167–220 (AAAEVEQAEDVAAAEQQDSSPVDDHADDADGVADGEGRDEGAGDASDEEEMPST). Over residues 211 to 220 (ASDEEEMPST) the composition is skewed to acidic residues.

The protein belongs to the bacterial ribosomal protein bL9 family.

Binds to the 23S rRNA. The sequence is that of Large ribosomal subunit protein bL9 from Anaplasma marginale (strain Florida).